Here is a 490-residue protein sequence, read N- to C-terminus: Costunolide synthase (490 aa).

A helical; Signal-anchor for type II membrane protein membrane pass occupies residues 3–23; that stretch reads PLTIVSLAVASFLLFAFWALS. N-linked (GlcNAc...) asparagine glycosylation is found at asparagine 167 and asparagine 255. Cysteine 432 is a heme binding site.

This sequence belongs to the cytochrome P450 family. Requires heme as cofactor.

The protein localises to the membrane. It catalyses the reaction germacra-1(10),4,11(13)-trien-12-oate + reduced [NADPH--hemoprotein reductase] + O2 = (+)-costunolide + oxidized [NADPH--hemoprotein reductase] + 2 H2O. Its pathway is secondary metabolite biosynthesis; terpenoid biosynthesis. Involved in the biosynthesis of germacrene-derived sesquiterpene lactones. Component of the parthenolide biosynthetic pathway; parthenolide and conjugates are promising anti-cancer drugs highly active against colon cancer cells. Hydroxylates germacrene A acid to 6-alpha-hydroxy-germacrne A acid, a precursor of sesquiterpene lactones that spontaneously undergoes a lactonization which yields costunolide. The protein is Costunolide synthase of Lactuca sativa (Garden lettuce).